The primary structure comprises 1188 residues: DNA-directed RNA polymerase subunit beta (1188 aa).

Belongs to the RNA polymerase beta chain family. The RNAP catalytic core consists of 2 alpha, 1 beta, 1 beta' and 1 omega subunit. When a sigma factor is associated with the core the holoenzyme is formed, which can initiate transcription.

The enzyme catalyses RNA(n) + a ribonucleoside 5'-triphosphate = RNA(n+1) + diphosphate. In terms of biological role, DNA-dependent RNA polymerase catalyzes the transcription of DNA into RNA using the four ribonucleoside triphosphates as substrates. In Streptococcus sanguinis (strain SK36), this protein is DNA-directed RNA polymerase subunit beta.